We begin with the raw amino-acid sequence, 363 residues long: Peptide chain release factor 1 (363 aa).

Gln237 carries the post-translational modification N5-methylglutamine. Positions 284–296 are enriched in basic and acidic residues; that stretch reads EDEKRRSAEESTR. Residues 284–306 are disordered; the sequence is EDEKRRSAEESTRRSLVASGDRS.

This sequence belongs to the prokaryotic/mitochondrial release factor family. Post-translationally, methylated by PrmC. Methylation increases the termination efficiency of RF1.

The protein resides in the cytoplasm. Its function is as follows. Peptide chain release factor 1 directs the termination of translation in response to the peptide chain termination codons UAG and UAA. This chain is Peptide chain release factor 1, found in Shewanella oneidensis (strain ATCC 700550 / JCM 31522 / CIP 106686 / LMG 19005 / NCIMB 14063 / MR-1).